The chain runs to 506 residues: Dipeptide and tripeptide permease A (506 aa).

Residues methionine 1 to arginine 36 are Cytoplasmic-facing. Residues phenylalanine 37 to serine 57 form a helical membrane-spanning segment. The Periplasmic portion of the chain corresponds to glutamate 58–serine 61. A helical membrane pass occupies residues isoleucine 62–leucine 82. Over glycine 83 to arginine 91 the chain is Cytoplasmic. Transmembrane regions (helical) follow at residues valine 92–histidine 112 and serine 113–alanine 133. Residues asparagine 134–threonine 155 lie on the Cytoplasmic side of the membrane. Residues methionine 156–alanine 176 form a helical membrane-spanning segment. The Periplasmic portion of the chain corresponds to alanine 177 to glycine 180. The helical transmembrane segment at tryptophan 181–phenylalanine 201 threads the bilayer. The Cytoplasmic segment spans residues cysteine 202 to lysine 222. The chain crosses the membrane as a helical span at residues leucine 223–asparagine 243. Topologically, residues glutamine 244 to arginine 248 are periplasmic. The helical transmembrane segment at tryptophan 249–valine 269 threads the bilayer. Topologically, residues serine 270–lysine 276 are cytoplasmic. The chain crosses the membrane as a helical span at residues methionine 277–methionine 297. Topologically, residues proline 298–glutamine 322 are periplasmic. A helical transmembrane segment spans residues tyrosine 323–asparagine 343. Over lysine 344–lysine 354 the chain is Cytoplasmic. Residues phenylalanine 355–methionine 375 traverse the membrane as a helical segment. Residues alanine 376–asparagine 385 lie on the Periplasmic side of the membrane. A helical membrane pass occupies residues tryptophan 386–leucine 406. Residues alanine 407–arginine 416 are Cytoplasmic-facing. A helical membrane pass occupies residues leucine 417–glycine 437. Residues tyrosine 438 to asparagine 461 lie on the Periplasmic side of the membrane. A helical transmembrane segment spans residues valine 462–proline 482. Topologically, residues lysine 483–alanine 506 are cytoplasmic.

This sequence belongs to the major facilitator superfamily. Proton-dependent oligopeptide transporter (POT/PTR) (TC 2.A.17) family. DtpA subfamily.

It localises to the cell inner membrane. Proton-dependent permease that transports di- and tripeptides. The sequence is that of Dipeptide and tripeptide permease A from Pectobacterium carotovorum subsp. carotovorum (strain PC1).